A 249-amino-acid chain; its full sequence is tRNA pseudouridine synthase A (249 aa).

Catalysis depends on Asp-54, which acts as the Nucleophile. Residue Tyr-111 participates in substrate binding.

Belongs to the tRNA pseudouridine synthase TruA family. As to quaternary structure, homodimer.

It catalyses the reaction uridine(38/39/40) in tRNA = pseudouridine(38/39/40) in tRNA. Its function is as follows. Formation of pseudouridine at positions 38, 39 and 40 in the anticodon stem and loop of transfer RNAs. The chain is tRNA pseudouridine synthase A from Mycoplasma capricolum subsp. capricolum (strain California kid / ATCC 27343 / NCTC 10154).